The chain runs to 291 residues: MSLTFQAVIAKLNEFWADRGCLVAQPYDTEKGAGTMSPHTFLRAIGPEPWAVAYVEPCRRPTDGRYGENPNRFQHYYQYQVLIKPSPDNIQEIYLDSLRVLGINPEDHDIRFVEDNWESPTLGAWGVGWEVWLDGMEITQFTYFQQCGGIDCRPVAIEITYGLERLAMYLQDVEAINKIQWNENILYGDIFLQNEIEQCTYNFEASNPELLFSLFSLYEQEAKQLIDRSLVIPSLDYVLKCSHTFNLLDARGVIAVAERTRYIGRIRNLARQVAQLYLQQREALGFPLQTV.

The protein belongs to the class-II aminoacyl-tRNA synthetase family. Tetramer of two alpha and two beta subunits.

It localises to the cytoplasm. The catalysed reaction is tRNA(Gly) + glycine + ATP = glycyl-tRNA(Gly) + AMP + diphosphate. The polypeptide is Glycine--tRNA ligase alpha subunit (Microcystis aeruginosa (strain NIES-843 / IAM M-2473)).